A 935-amino-acid polypeptide reads, in one-letter code: Disintegrin and metalloproteinase domain-containing protein 22 (935 aa).

The first 24 residues, 1 to 24 (MHINGGPLASWICCVIGSIHLAHA), serve as a signal peptide directing secretion. Positions 25–227 (STRPENGGTS…QQTRSQRKKR (203 aa)) are excised as a propeptide. 2 N-linked (GlcNAc...) asparagine glycosylation sites follow: Asn-167 and Asn-210. At 228-736 (QTRRYPRNVE…NRDEGVISTN (509 aa)) the chain is on the extracellular side. A Peptidase M12B domain is found at 241 to 440 (KYVELMIVND…GGGACLFNKP (200 aa)). Disulfide bonds link Cys-351–Cys-435, Cys-394–Cys-419, Cys-396–Cys-403, Cys-449–Cys-479, Cys-460–Cys-476, Cys-462–Cys-468, Cys-475–Cys-496, Cys-487–Cys-493, Cys-492–Cys-518, Cys-505–Cys-525, Cys-512–Cys-544, Cys-537–Cys-549, Cys-556–Cys-607, Cys-571–Cys-637, Cys-585–Cys-595, Cys-602–Cys-665, and Cys-659–Cys-670. Residues 446 to 533 (PPECGNGFVE…QCPANIHKLD (88 aa)) enclose the Disintegrin domain. Asn-521 is a glycosylation site (N-linked (GlcNAc...) asparagine). Residues Asn-609 and Asn-636 are each glycosylated (N-linked (GlcNAc...) asparagine). N-linked (GlcNAc...) asparagine glycosylation occurs at Asn-677. The 37-residue stretch at 677-713 (NFSTCLGSTNKICSGHGVCSNEVRCICDRFWTGEDCS) folds into the EGF-like domain. Disulfide bonds link Cys-681–Cys-695, Cys-689–Cys-701, and Cys-703–Cys-712. A helical membrane pass occupies residues 737–757 (IIIGAIAGTILVLALVLGITA). Topologically, residues 758-935 (WGYKNYRRER…QSARLWETSI (178 aa)) are cytoplasmic. Residues 850–935 (VSDVCENGRP…QSARLWETSI (86 aa)) form a disordered region. Residues 859–870 (PRSNSWQGNVTS) are compositionally biased toward polar residues. Residues 871–882 (SRKKLRGKRFRP) are compositionally biased toward basic residues. Positions 891-906 (SPAKSPSSSTGSIASS) are enriched in low complexity.

In terms of processing, the precursor is cleaved by a furin endopeptidase. In terms of tissue distribution, low levels in adult tissues. Not detected in developing embryos.

Its subcellular location is the cell membrane. In terms of biological role, probable ligand for integrin in the brain. This is a non catalytic metalloprotease-like protein. The protein is Disintegrin and metalloproteinase domain-containing protein 22 (adam22) of Xenopus laevis (African clawed frog).